We begin with the raw amino-acid sequence, 348 residues long: CCN family member 2 (348 aa).

The first 25 residues, 1–25 (MLASVAGPISLALVLLALCTRPAMG), serve as a signal peptide directing secretion. In terms of domain architecture, IGFBP N-terminal spans 26–97 (QDCSAQCQCA…NRKIGVCTAK (72 aa)). 6 disulfide bridges follow: Cys-28-Cys-53, Cys-32-Cys-55, Cys-34-Cys-56, Cys-42-Cys-59, Cys-67-Cys-81, and Cys-73-Cys-94. Positions 100–166 (APCVFGGSVY…GKCCEEWVCD (67 aa)) constitute a VWFC domain. One can recognise a TSP type-1 domain in the interval 197–242 (NCLVQTTEWSACSKTCGMGISTRVTNDNTFCRLEKQSRLCMVRPCE). The interval 246-348 (EENIKKGKKC…YYRKMYGDMA (103 aa)) is heparin-binding. 5 cysteine pairs are disulfide-bonded: Cys-255-Cys-292, Cys-272-Cys-306, Cys-283-Cys-322, Cys-286-Cys-324, and Cys-291-Cys-328. One can recognise a CTCK domain in the interval 255–329 (CIRTPKIAKP…KTCACHYNCP (75 aa)).

This sequence belongs to the CCN family. In terms of assembly, monomer. Interacts with TSKU. Testis, spleen, kidney, lung, heart, and brain (lowest level in testis and highest in lung).

Its subcellular location is the secreted. The protein resides in the extracellular space. The protein localises to the extracellular matrix. Its function is as follows. Major connective tissue mitoattractant secreted by vascular endothelial cells. Promotes proliferation and differentiation of chondrocytes. Is involved in the stimulation of osteoblast differentiation and has a critical role in osteogenesis. Mediates heparin- and divalent cation-dependent cell adhesion in many cell types including fibroblasts, myofibroblasts, endothelial and epithelial cells. Enhances fibroblast growth factor-induced DNA synthesis. This Mus musculus (Mouse) protein is CCN family member 2.